Reading from the N-terminus, the 432-residue chain is Enolase (432 aa).

Position 167 (glutamine 167) interacts with (2R)-2-phosphoglycerate. Residue glutamate 209 is the Proton donor of the active site. Residues aspartate 246, glutamate 290, and aspartate 317 each coordinate Mg(2+). Residues lysine 342, arginine 371, serine 372, and lysine 393 each contribute to the (2R)-2-phosphoglycerate site. The active-site Proton acceptor is the lysine 342.

Belongs to the enolase family. Component of the RNA degradosome, a multiprotein complex involved in RNA processing and mRNA degradation. The cofactor is Mg(2+).

The protein localises to the cytoplasm. The protein resides in the secreted. Its subcellular location is the cell surface. The catalysed reaction is (2R)-2-phosphoglycerate = phosphoenolpyruvate + H2O. It participates in carbohydrate degradation; glycolysis; pyruvate from D-glyceraldehyde 3-phosphate: step 4/5. In terms of biological role, catalyzes the reversible conversion of 2-phosphoglycerate (2-PG) into phosphoenolpyruvate (PEP). It is essential for the degradation of carbohydrates via glycolysis. In Salmonella dublin (strain CT_02021853), this protein is Enolase.